The sequence spans 953 residues: UvrABC system protein A (953 aa).

33–40 (GLSGSGKS) contributes to the ATP binding site. 2 ABC transporter domains span residues 320-599 (WGST…EESI) and 619-949 (GHDN…RYLK). Position 652–659 (652–659 (GVSGSGKS)) interacts with ATP. The segment at 752 to 778 (CEACQGDGLIKIEMHFLPDVYVKCDIC) adopts a C4-type zinc-finger fold.

It belongs to the ABC transporter superfamily. UvrA family. Forms a heterotetramer with UvrB during the search for lesions.

It localises to the cytoplasm. Its function is as follows. The UvrABC repair system catalyzes the recognition and processing of DNA lesions. UvrA is an ATPase and a DNA-binding protein. A damage recognition complex composed of 2 UvrA and 2 UvrB subunits scans DNA for abnormalities. When the presence of a lesion has been verified by UvrB, the UvrA molecules dissociate. This is UvrABC system protein A from Rickettsia prowazekii (strain Madrid E).